A 156-amino-acid chain; its full sequence is Riboflavin synthase (156 aa).

The protein belongs to the DMRL synthase family.

It catalyses the reaction 2 6,7-dimethyl-8-(1-D-ribityl)lumazine + H(+) = 5-amino-6-(D-ribitylamino)uracil + riboflavin. It participates in cofactor biosynthesis; riboflavin biosynthesis; riboflavin from 2-hydroxy-3-oxobutyl phosphate and 5-amino-6-(D-ribitylamino)uracil: step 2/2. This chain is Riboflavin synthase (ribC), found in Methanocaldococcus jannaschii (strain ATCC 43067 / DSM 2661 / JAL-1 / JCM 10045 / NBRC 100440) (Methanococcus jannaschii).